The sequence spans 130 residues: Peptide methionine sulfoxide reductase MsrB (130 aa).

The region spanning Leu8–Arg130 is the MsrB domain. The Zn(2+) site is built by Cys47, Cys50, Cys96, and Cys99. The active-site Nucleophile is Cys119.

It belongs to the MsrB Met sulfoxide reductase family. Zn(2+) is required as a cofactor.

The catalysed reaction is L-methionyl-[protein] + [thioredoxin]-disulfide + H2O = L-methionyl-(R)-S-oxide-[protein] + [thioredoxin]-dithiol. The polypeptide is Peptide methionine sulfoxide reductase MsrB (Pseudomonas fluorescens (strain ATCC BAA-477 / NRRL B-23932 / Pf-5)).